Reading from the N-terminus, the 67-residue chain is Large ribosomal subunit protein bL35 (67 aa).

It belongs to the bacterial ribosomal protein bL35 family.

In Sinorhizobium fredii (strain NBRC 101917 / NGR234), this protein is Large ribosomal subunit protein bL35.